Here is a 156-residue protein sequence, read N- to C-terminus: Small ribosomal subunit protein uS7 (156 aa).

It belongs to the universal ribosomal protein uS7 family. As to quaternary structure, part of the 30S ribosomal subunit. Contacts proteins S9 and S11.

In terms of biological role, one of the primary rRNA binding proteins, it binds directly to 16S rRNA where it nucleates assembly of the head domain of the 30S subunit. Is located at the subunit interface close to the decoding center, probably blocks exit of the E-site tRNA. The polypeptide is Small ribosomal subunit protein uS7 (Aliivibrio fischeri (strain MJ11) (Vibrio fischeri)).